We begin with the raw amino-acid sequence, 424 residues long: N-succinylarginine dihydrolase (424 aa).

Substrate contacts are provided by residues 19 to 28 (AGLSPGNIAS), Asn-110, and 137 to 138 (HR). Residue Glu-174 is part of the active site. Position 207 (Arg-207) interacts with substrate. His-240 is an active-site residue. Substrate is bound by residues Asp-242 and Asn-349. The Nucleophile role is filled by Cys-355.

Belongs to the succinylarginine dihydrolase family. In terms of assembly, homodimer.

The catalysed reaction is N(2)-succinyl-L-arginine + 2 H2O + 2 H(+) = N(2)-succinyl-L-ornithine + 2 NH4(+) + CO2. It participates in amino-acid degradation; L-arginine degradation via AST pathway; L-glutamate and succinate from L-arginine: step 2/5. Functionally, catalyzes the hydrolysis of N(2)-succinylarginine into N(2)-succinylornithine, ammonia and CO(2). This is N-succinylarginine dihydrolase from Rhizorhabdus wittichii (strain DSM 6014 / CCUG 31198 / JCM 15750 / NBRC 105917 / EY 4224 / RW1) (Sphingomonas wittichii).